Consider the following 489-residue polypeptide: Zinc finger protein 58 (489 aa).

The 72-residue stretch at 2–73 (LSFWDVAIDF…KRQAAAAVHP (72 aa)) folds into the KRAB domain. The C2H2-type 1; degenerate zinc finger occupies 78-100 (NKCKDFSKAFFCKSLLTQHQRIR). C2H2-type zinc fingers lie at residues 106–128 (FKCEECGKAFNNRSNLSEHKRIH), 134–156 (YKCEECGKAFRIRSKLSTHQRVH), 162–184 (YKCEECGKAFNSHSNLSEHKRIH), 190–212 (YKCEECGKAFSTRSTYYRHQKNH), 218–240 (YKCEECAKEFSYPSLLKVHQRIH), 246–268 (YKCEECGKPFYCPLLLKKHQIIH), 274–296 (YKCAECGKAFHYPSLLKRHQRIH), 302–324 (CKCKDCDRAFYSSAFLKRHQRIH), 330–352 (YKCGECGKRFCSFPHLQYHQRFH), 358–380 (YKCEQCGKTFSTLSYLPWHKLRH), 386–408 (YKCEKCGKMFYSTLDLKKHQKIH), 410–432 (YKCGECHYGFPNYAALTAHQRVH), 438–460 (HVCEQCGKDFSRIDSLNQHQLVH), and 466–488 (YKCEKCGKCFYRSSSLKRHQGIH).

Belongs to the krueppel C2H2-type zinc-finger protein family. As to expression, expressed in liver, testis and, at considerably lower levels, in brain, spleen and heart.

It is found in the nucleus. Functionally, may have a role during differentiation processes. The chain is Zinc finger protein 58 (Zfp58) from Mus musculus (Mouse).